The chain runs to 237 residues: ATP-dependent dethiobiotin synthetase BioD (237 aa).

Position 12–17 (12–17 (DAGKTL)) interacts with ATP. Residue Thr-16 participates in Mg(2+) binding. The active site involves Lys-37. Ser-41 contributes to the substrate binding site. ATP is bound by residues Asp-54, 116–119 (EGAG), and 213–215 (PRL). 2 residues coordinate Mg(2+): Asp-54 and Glu-116.

The protein belongs to the dethiobiotin synthetase family. As to quaternary structure, homodimer. Mg(2+) serves as cofactor.

The protein resides in the cytoplasm. The enzyme catalyses (7R,8S)-7,8-diammoniononanoate + CO2 + ATP = (4R,5S)-dethiobiotin + ADP + phosphate + 3 H(+). It participates in cofactor biosynthesis; biotin biosynthesis; biotin from 7,8-diaminononanoate: step 1/2. Catalyzes a mechanistically unusual reaction, the ATP-dependent insertion of CO2 between the N7 and N8 nitrogen atoms of 7,8-diaminopelargonic acid (DAPA, also called 7,8-diammoniononanoate) to form a ureido ring. In Chromohalobacter salexigens (strain ATCC BAA-138 / DSM 3043 / CIP 106854 / NCIMB 13768 / 1H11), this protein is ATP-dependent dethiobiotin synthetase BioD.